A 270-amino-acid polypeptide reads, in one-letter code: 3-methyl-2-oxobutanoate hydroxymethyltransferase (270 aa).

Mg(2+) is bound by residues Asp53 and Asp92. 3-methyl-2-oxobutanoate-binding positions include 53 to 54, Asp92, and Lys120; that span reads DS. Position 122 (Glu122) interacts with Mg(2+). Glu189 serves as the catalytic Proton acceptor.

This sequence belongs to the PanB family. In terms of assembly, homodecamer; pentamer of dimers. Mg(2+) serves as cofactor.

It localises to the cytoplasm. It carries out the reaction 3-methyl-2-oxobutanoate + (6R)-5,10-methylene-5,6,7,8-tetrahydrofolate + H2O = 2-dehydropantoate + (6S)-5,6,7,8-tetrahydrofolate. It participates in cofactor biosynthesis; (R)-pantothenate biosynthesis; (R)-pantoate from 3-methyl-2-oxobutanoate: step 1/2. Its function is as follows. Catalyzes the reversible reaction in which hydroxymethyl group from 5,10-methylenetetrahydrofolate is transferred onto alpha-ketoisovalerate to form ketopantoate. In Saccharophagus degradans (strain 2-40 / ATCC 43961 / DSM 17024), this protein is 3-methyl-2-oxobutanoate hydroxymethyltransferase.